A 385-amino-acid polypeptide reads, in one-letter code: Calcium/calmodulin-dependent protein kinase type 1D (385 aa).

The Protein kinase domain maps to 23–279; sequence FEFKETLGTG…CEQAARHPWI (257 aa). ATP contacts are provided by residues 29 to 37 and lysine 52; that span reads LGTGAFSEV. A Glycyl lysine isopeptide (Lys-Gly) (interchain with G-Cter in SUMO2) cross-link involves residue lysine 113. Serine 122 bears the Phosphoserine mark. The active-site Proton acceptor is the aspartate 144. Threonine 180 is subject to Phosphothreonine; by CaMKK1 and CaMKK2. An autoinhibitory domain region spans residues 279–319; the sequence is IAGDTALSKNIHESVSAQIRKNFAKSKWRQAFNATAVVRHM. The tract at residues 299–320 is calmodulin-binding; that stretch reads KNFAKSKWRQAFNATAVVRHMR. A Nuclear export signal motif is present at residues 318–324; sequence HMRRLQL. Positions 363–385 are disordered; it reads VAGVGAERRPRPTTVTTGHTGSK. A compositionally biased stretch (polar residues) spans 375–385; that stretch reads TTVTTGHTGSK.

The protein belongs to the protein kinase superfamily. CAMK Ser/Thr protein kinase family. CaMK subfamily. Expressed ubiquitously with high levels in brain and low levels in kidney. Isoform 2 is highly expressed in brain compared to other tissues. In hematopoietic cell lines predominant expression was detected in T and EC cells.

It localises to the cytoplasm. It is found in the nucleus. It catalyses the reaction L-seryl-[protein] + ATP = O-phospho-L-seryl-[protein] + ADP + H(+). The enzyme catalyses L-threonyl-[protein] + ATP = O-phospho-L-threonyl-[protein] + ADP + H(+). With respect to regulation, activated by Ca(2+)/calmodulin. Binding of calmodulin results in conformational change that relieves intrasteric autoinhibition and allows phosphorylation of Thr-180 within the activation loop by CaMKK1 or CaMKK2. Phosphorylation of Thr-180 results in several fold increase in total activity. Unlike CaMK4, may be unable to exhibit autonomous activity after Ca(2+)/calmodulin activation. Functionally, calcium/calmodulin-dependent protein kinase that operates in the calcium-triggered CaMKK-CaMK1 signaling cascade and, upon calcium influx, activates CREB-dependent gene transcription, regulates calcium-mediated granulocyte function and respiratory burst and promotes basal dendritic growth of hippocampal neurons. In neutrophil cells, required for cytokine-induced proliferative responses and activation of the respiratory burst. Activates the transcription factor CREB1 in hippocampal neuron nuclei. May play a role in apoptosis of erythroleukemia cells. In vitro, phosphorylates transcription factor CREM isoform Beta. Isoform 1 but not isoform 2 activates CREB1. This Mus musculus (Mouse) protein is Calcium/calmodulin-dependent protein kinase type 1D (Camk1d).